The following is a 425-amino-acid chain: UDP-N-acetylglucosamine 1-carboxyvinyltransferase (425 aa).

23 to 24 serves as a coordination point for phosphoenolpyruvate; the sequence is KN. UDP-N-acetyl-alpha-D-glucosamine is bound at residue R100. C124 (proton donor) is an active-site residue. C124 carries the 2-(S-cysteinyl)pyruvic acid O-phosphothioketal modification. Residues D313 and I335 each coordinate UDP-N-acetyl-alpha-D-glucosamine.

It belongs to the EPSP synthase family. MurA subfamily.

The protein localises to the cytoplasm. The catalysed reaction is phosphoenolpyruvate + UDP-N-acetyl-alpha-D-glucosamine = UDP-N-acetyl-3-O-(1-carboxyvinyl)-alpha-D-glucosamine + phosphate. It participates in cell wall biogenesis; peptidoglycan biosynthesis. Its function is as follows. Cell wall formation. Adds enolpyruvyl to UDP-N-acetylglucosamine. In Wolbachia sp. subsp. Brugia malayi (strain TRS), this protein is UDP-N-acetylglucosamine 1-carboxyvinyltransferase.